The sequence spans 346 residues: uncharacterized protein (346 aa).

Belongs to the MG067/MG068/MG395 family.

This is an uncharacterized protein from Mycoplasma pneumoniae (strain ATCC 29342 / M129 / Subtype 1) (Mycoplasmoides pneumoniae).